Here is a 723-residue protein sequence, read N- to C-terminus: Choline transporter-like protein 4 (723 aa).

The Cytoplasmic portion of the chain corresponds to 1-36 (MGKKKQEEEQNSSEYGAPAQYDPTFNGPIHKRSCTD). A helical membrane pass occupies residues 37–57 (IICCVLFMLVITGYMVVGILA). Residues 58 to 245 (WLYGDPRHVL…RIFEDFAKTW (188 aa)) lie on the Extracellular side of the membrane. Residues Asn-71, Asn-202, Asn-211, and Asn-219 are each glycosylated (N-linked (GlcNAc...) asparagine). Residues 246 to 266 (QWIVAGLVIAMVVSVLFLLLL) form a helical membrane-spanning segment. The Cytoplasmic portion of the chain corresponds to 267 to 269 (RFT). The chain crosses the membrane as a helical span at residues 270-290 (APVLIWILIFGVLAVGAFGIW). At 291 to 325 (YCYNDYMSLASSNLTFSNVGFTTNVQVYLQVRDTW) the chain is on the extracellular side. The N-linked (GlcNAc...) asparagine glycan is linked to Asn-303. The helical transmembrane segment at 326 to 346 (LAFLIILCIVEAVLILALIFL) threads the bilayer. Over 347-374 (RTRILIAIALIQETSKALGHMMSTLLYP) the chain is Cytoplasmic. The helical transmembrane segment at 375-395 (VVTFVLLLVCVSYWGITALYL) threads the bilayer. Over 396 to 464 (ATSGAPIYKV…RNLFNLQIYN (69 aa)) the chain is Extracellular. Asn-409, Asn-421, and Asn-430 each carry an N-linked (GlcNAc...) asparagine glycan. The helical transmembrane segment at 465-485 (VVAFLWCVNFVIALGHCTLAG) threads the bilayer. Over 486 to 516 (AFASYYWAFSKPADIPTFPLTQSFMRALRYH) the chain is Cytoplasmic. The chain crosses the membrane as a helical span at residues 517–537 (VGSLAFGALILTLVQIVRIIL). The Extracellular portion of the chain corresponds to 538–578 (EYLDHKFKAAQNPCARFLMCCLKCCFWCLEKFIKFINRNAY). A helical transmembrane segment spans residues 579–599 (IMIAIYGKNFCVSAKNAFFLL). Over 600–615 (MRNIVRVVVLDKVTDL) the chain is Cytoplasmic. Residues 616 to 636 (LLFFGKLLVVGGIGVLAFFFF) form a helical membrane-spanning segment. The Extracellular portion of the chain corresponds to 637-655 (SGRIQLPGNTFQTAALNYY). Residues 656-676 (WMPIITVVFGAYLIAHGFFSV) form a helical membrane-spanning segment. The Cytoplasmic segment spans residues 677–723 (YNMGVDTLFLCFLEDLERNDGSAEKPYFMSKNLMKILNKKNKQPKTG).

It belongs to the CTL (choline transporter-like) family.

It localises to the membrane. It is found in the apical cell membrane. It catalyses the reaction choline(out) + n H(+)(in) = choline(in) + n H(+)(out). It carries out the reaction thiamine diphosphate(out) = thiamine diphosphate(in). Functionally, choline transporter that seems to play a role in the choline-acetylcholine system and is required to the efferent innervation of hair cells in the olivocochlear bundle for the maintenance of physiological function of outer hair cells and the protection of hair cells from acoustic injury. Also described as a thiamine pyrophosphate transporter. The polypeptide is Choline transporter-like protein 4 (slc44a4) (Danio rerio (Zebrafish)).